A 143-amino-acid polypeptide reads, in one-letter code: Deoxyuridine 5'-triphosphate nucleotidohydrolase (143 aa).

This sequence belongs to the dUTPase family. Mg(2+) serves as cofactor.

The enzyme catalyses dUTP + H2O = dUMP + diphosphate + H(+). This enzyme is involved in nucleotide metabolism: it produces dUMP, the immediate precursor of thymidine nucleotides and it decreases the intracellular concentration of dUTP so that uracil cannot be incorporated into DNA. This chain is Deoxyuridine 5'-triphosphate nucleotidohydrolase (DUT), found in Yaba monkey tumor virus (strain VR587) (YMTV).